The following is a 630-amino-acid chain: Chaperone protein HtpG (630 aa).

An a; substrate-binding region spans residues 1-339 (MSHTETHAFQ…SNDLPLNVSR (339 aa)). The segment at 340–556 (EILQSNRVVD…EGDISAHMAR (217 aa)) is b. Residues 557–630 (MMEQMGQAMP…RMNALLSEVI (74 aa)) form a c region.

It belongs to the heat shock protein 90 family. Homodimer.

Its subcellular location is the cytoplasm. Molecular chaperone. Has ATPase activity. This Hydrogenovibrio crunogenus (strain DSM 25203 / XCL-2) (Thiomicrospira crunogena) protein is Chaperone protein HtpG.